The sequence spans 61 residues: Small ribosomal subunit protein uS14 (61 aa).

4 residues coordinate Zn(2+): C24, C27, C40, and C43.

It belongs to the universal ribosomal protein uS14 family. Zinc-binding uS14 subfamily. In terms of assembly, part of the 30S ribosomal subunit. Contacts proteins S3 and S10. Zn(2+) serves as cofactor.

Binds 16S rRNA, required for the assembly of 30S particles and may also be responsible for determining the conformation of the 16S rRNA at the A site. In Nitratidesulfovibrio vulgaris (strain DSM 19637 / Miyazaki F) (Desulfovibrio vulgaris), this protein is Small ribosomal subunit protein uS14.